Reading from the N-terminus, the 393-residue chain is Arginine biosynthesis bifunctional protein ArgJ (393 aa).

Residues Thr142, Lys168, Thr179, Glu265, Asn388, and Thr393 each coordinate substrate. The active-site Nucleophile is the Thr179.

It belongs to the ArgJ family. As to quaternary structure, heterotetramer of two alpha and two beta chains.

The protein resides in the cytoplasm. It carries out the reaction N(2)-acetyl-L-ornithine + L-glutamate = N-acetyl-L-glutamate + L-ornithine. The enzyme catalyses L-glutamate + acetyl-CoA = N-acetyl-L-glutamate + CoA + H(+). It functions in the pathway amino-acid biosynthesis; L-arginine biosynthesis; L-ornithine and N-acetyl-L-glutamate from L-glutamate and N(2)-acetyl-L-ornithine (cyclic): step 1/1. Its pathway is amino-acid biosynthesis; L-arginine biosynthesis; N(2)-acetyl-L-ornithine from L-glutamate: step 1/4. Catalyzes two activities which are involved in the cyclic version of arginine biosynthesis: the synthesis of N-acetylglutamate from glutamate and acetyl-CoA as the acetyl donor, and of ornithine by transacetylation between N(2)-acetylornithine and glutamate. The chain is Arginine biosynthesis bifunctional protein ArgJ from Geobacter sulfurreducens (strain ATCC 51573 / DSM 12127 / PCA).